The chain runs to 33 residues: U-limacoditoxin(13)-As11 (33 aa).

Positions 1–19 (MFKLLLVLALTMLAQSALA) are cleaved as a signal peptide. Phe32 is modified (phenylalanine amide).

The protein belongs to the FARP (FMRFamide related peptide) family. Expressed by the venom secretory cell of the spine. The spine is a cuticular structure containing a single large nucleated venom-secreting cell at its base. It is an independent unit capable of producing, storing and injecting venom. On the back of A.stimulea caterpillars, spines are grouped together by 50 to 100 to form scoli, of which there are eight.

It localises to the secreted. Is toxic when injected into Drosophila melanogaster. Also shows a low anthelmintic activity against the parasitic nematode H.contortus (drug susceptible Kirby isolate). This chain is U-limacoditoxin(13)-As11, found in Acharia stimulea (Saddleback caterpillar moth).